Here is a 143-residue protein sequence, read N- to C-terminus: Transcriptional regulator MraZ (143 aa).

2 consecutive SpoVT-AbrB domains span residues 5–47 (TYTP…PREE) and 76–119 (TDEQ…DAQA).

The protein belongs to the MraZ family. Forms oligomers.

Its subcellular location is the cytoplasm. The protein localises to the nucleoid. This Rhodococcus opacus (strain B4) protein is Transcriptional regulator MraZ.